The primary structure comprises 397 residues: Arginine biosynthesis bifunctional protein ArgJ (397 aa).

Residues Thr147, Lys173, Thr184, Glu270, Asn392, and Thr397 each coordinate substrate. Catalysis depends on Thr184, which acts as the Nucleophile.

It belongs to the ArgJ family. As to quaternary structure, heterotetramer of two alpha and two beta chains.

Its subcellular location is the cytoplasm. It carries out the reaction N(2)-acetyl-L-ornithine + L-glutamate = N-acetyl-L-glutamate + L-ornithine. The catalysed reaction is L-glutamate + acetyl-CoA = N-acetyl-L-glutamate + CoA + H(+). It participates in amino-acid biosynthesis; L-arginine biosynthesis; L-ornithine and N-acetyl-L-glutamate from L-glutamate and N(2)-acetyl-L-ornithine (cyclic): step 1/1. Its pathway is amino-acid biosynthesis; L-arginine biosynthesis; N(2)-acetyl-L-ornithine from L-glutamate: step 1/4. Its function is as follows. Catalyzes two activities which are involved in the cyclic version of arginine biosynthesis: the synthesis of N-acetylglutamate from glutamate and acetyl-CoA as the acetyl donor, and of ornithine by transacetylation between N(2)-acetylornithine and glutamate. This chain is Arginine biosynthesis bifunctional protein ArgJ, found in Streptococcus thermophilus (strain ATCC BAA-250 / LMG 18311).